The sequence spans 308 residues: tRNA uridine(34) hydroxylase (308 aa).

A Rhodanese domain is found at 129–223 (QEKDVLILDA…YGKHPETQGV (95 aa)). C183 acts as the Cysteine persulfide intermediate in catalysis.

It belongs to the TrhO family.

It catalyses the reaction uridine(34) in tRNA + AH2 + O2 = 5-hydroxyuridine(34) in tRNA + A + H2O. Catalyzes oxygen-dependent 5-hydroxyuridine (ho5U) modification at position 34 in tRNAs. The sequence is that of tRNA uridine(34) hydroxylase from Aster yellows witches'-broom phytoplasma (strain AYWB).